Reading from the N-terminus, the 208-residue chain is Mediator of RNA polymerase II transcription subunit 18 (208 aa).

Belongs to the Mediator complex subunit 18 family. Component of the Mediator complex.

The protein resides in the nucleus. Its function is as follows. Component of the Mediator complex, a coactivator involved in the regulated transcription of nearly all RNA polymerase II-dependent genes. Mediator functions as a bridge to convey information from gene-specific regulatory proteins to the basal RNA polymerase II transcription machinery. Mediator is recruited to promoters by direct interactions with regulatory proteins and serves as a scaffold for the assembly of a functional preinitiation complex with RNA polymerase II and the general transcription factors. The chain is Mediator of RNA polymerase II transcription subunit 18 (med18) from Xenopus tropicalis (Western clawed frog).